Here is a 561-residue protein sequence, read N- to C-terminus: Septation ring formation regulator EzrA (561 aa).

At 1 to 3 the chain is on the extracellular side; sequence MWI. Residues 4–22 form a helical membrane-spanning segment; sequence VVFSLLVLTVTFFVYGALR. Residues 23 to 561 are Cytoplasmic-facing; sequence RKAFYKRVDK…VLEKVQHLAG (539 aa). Coiled-coil stretches lie at residues 98-130, 166-214, and 251-465; these read RFQKAKALLDTIEQRLHSIEEQLKIMVDDIQVL, AKVF…HLLK, and FAID…KLSD.

This sequence belongs to the EzrA family.

Its subcellular location is the cell membrane. Its function is as follows. Negative regulator of FtsZ ring formation; modulates the frequency and position of FtsZ ring formation. Inhibits FtsZ ring formation at polar sites. Interacts either with FtsZ or with one of its binding partners to promote depolymerization. The sequence is that of Septation ring formation regulator EzrA from Halalkalibacterium halodurans (strain ATCC BAA-125 / DSM 18197 / FERM 7344 / JCM 9153 / C-125) (Bacillus halodurans).